Reading from the N-terminus, the 354-residue chain is Adenine deaminase (354 aa).

Zn(2+)-binding residues include histidine 20, histidine 22, and histidine 200. Glutamate 203 acts as the Proton donor in catalysis. Residue aspartate 281 coordinates Zn(2+). Substrate is bound at residue aspartate 282.

Belongs to the metallo-dependent hydrolases superfamily. Adenosine and AMP deaminases family. Adenine deaminase type 2 subfamily. It depends on Zn(2+) as a cofactor.

It carries out the reaction adenine + H2O + H(+) = hypoxanthine + NH4(+). Catalyzes the hydrolytic deamination of adenine to hypoxanthine. Plays an important role in the purine salvage pathway and in nitrogen catabolism. This is Adenine deaminase from Cupriavidus metallidurans (strain ATCC 43123 / DSM 2839 / NBRC 102507 / CH34) (Ralstonia metallidurans).